A 351-amino-acid polypeptide reads, in one-letter code: Probable protein phosphatase 2C 41 (351 aa).

In terms of domain architecture, PPM-type phosphatase spans 62–348 (FTSICSNRGE…DDISVLCLFF (287 aa)). Mn(2+) is bound by residues D98, G99, D293, and D339.

Belongs to the PP2C family. The cofactor is Mg(2+). Requires Mn(2+) as cofactor.

The enzyme catalyses O-phospho-L-seryl-[protein] + H2O = L-seryl-[protein] + phosphate. It catalyses the reaction O-phospho-L-threonyl-[protein] + H2O = L-threonyl-[protein] + phosphate. This chain is Probable protein phosphatase 2C 41, found in Arabidopsis thaliana (Mouse-ear cress).